The following is a 312-amino-acid chain: Putative S-adenosyl-L-methionine-dependent methyltransferase Mjls_0078 (312 aa).

S-adenosyl-L-methionine is bound by residues aspartate 134 and 163–164 (DL).

Belongs to the UPF0677 family.

Its function is as follows. Exhibits S-adenosyl-L-methionine-dependent methyltransferase activity. This chain is Putative S-adenosyl-L-methionine-dependent methyltransferase Mjls_0078, found in Mycobacterium sp. (strain JLS).